We begin with the raw amino-acid sequence, 171 residues long: S-ribosylhomocysteine lyase (171 aa).

Residues His54, His58, and Cys128 each contribute to the Fe cation site.

Belongs to the LuxS family. As to quaternary structure, homodimer. It depends on Fe cation as a cofactor.

It catalyses the reaction S-(5-deoxy-D-ribos-5-yl)-L-homocysteine = (S)-4,5-dihydroxypentane-2,3-dione + L-homocysteine. In terms of biological role, involved in the synthesis of autoinducer 2 (AI-2) which is secreted by bacteria and is used to communicate both the cell density and the metabolic potential of the environment. The regulation of gene expression in response to changes in cell density is called quorum sensing. Catalyzes the transformation of S-ribosylhomocysteine (RHC) to homocysteine (HC) and 4,5-dihydroxy-2,3-pentadione (DPD). The sequence is that of S-ribosylhomocysteine lyase from Pectobacterium carotovorum subsp. carotovorum (strain PC1).